Consider the following 209-residue polypeptide: Uracil phosphoribosyltransferase (209 aa).

5-phospho-alpha-D-ribose 1-diphosphate contacts are provided by residues Arg-79, Arg-104, and 131–139 (DPMLATGVS). Uracil-binding positions include Ile-194 and 199–201 (GDA). Asp-200 is a binding site for 5-phospho-alpha-D-ribose 1-diphosphate.

This sequence belongs to the UPRTase family. Mg(2+) serves as cofactor.

The catalysed reaction is UMP + diphosphate = 5-phospho-alpha-D-ribose 1-diphosphate + uracil. It participates in pyrimidine metabolism; UMP biosynthesis via salvage pathway; UMP from uracil: step 1/1. Its activity is regulated as follows. Allosterically activated by GTP. In terms of biological role, catalyzes the conversion of uracil and 5-phospho-alpha-D-ribose 1-diphosphate (PRPP) to UMP and diphosphate. This chain is Uracil phosphoribosyltransferase, found in Thermotoga petrophila (strain ATCC BAA-488 / DSM 13995 / JCM 10881 / RKU-1).